The sequence spans 330 residues: Diacylglycerol kinase (330 aa).

The DAGKc domain maps to 1 to 132 (MRKCARIIYN…VDIGKMNNRY (132 aa)). ATP is bound by residues 10–14 (NPTSG), T41, 67–73 (GDGTLNE), and T94. Residues K213, D216, and H218 each contribute to the Mg(2+) site. E273 (proton acceptor) is an active-site residue.

Belongs to the diacylglycerol/lipid kinase family. As to quaternary structure, homodimer. Mg(2+) serves as cofactor.

It carries out the reaction a 1,2-diacyl-sn-glycerol + ATP = a 1,2-diacyl-sn-glycero-3-phosphate + ADP + H(+). Its function is as follows. Catalyzes the phosphorylation of diacylglycerol (DAG) into phosphatidic acid. Is a key enzyme involved in the production of lipoteichoic acid by reintroducing DAG formed from the breakdown of membrane phospholipids into the phosphatidylglycerol biosynthetic pathway. The protein is Diacylglycerol kinase (dagK) of Staphylococcus haemolyticus (strain JCSC1435).